A 128-amino-acid polypeptide reads, in one-letter code: Small ribosomal subunit protein uS11 (128 aa).

The protein belongs to the universal ribosomal protein uS11 family. As to quaternary structure, part of the 30S ribosomal subunit. Interacts with proteins S7 and S18. Binds to IF-3.

Functionally, located on the platform of the 30S subunit, it bridges several disparate RNA helices of the 16S rRNA. Forms part of the Shine-Dalgarno cleft in the 70S ribosome. The protein is Small ribosomal subunit protein uS11 of Synechococcus sp. (strain JA-2-3B'a(2-13)) (Cyanobacteria bacterium Yellowstone B-Prime).